Consider the following 141-residue polypeptide: Putative pre-16S rRNA nuclease (141 aa).

This sequence belongs to the YqgF nuclease family.

Its subcellular location is the cytoplasm. In terms of biological role, could be a nuclease involved in processing of the 5'-end of pre-16S rRNA. In Shewanella oneidensis (strain ATCC 700550 / JCM 31522 / CIP 106686 / LMG 19005 / NCIMB 14063 / MR-1), this protein is Putative pre-16S rRNA nuclease.